We begin with the raw amino-acid sequence, 267 residues long: Hydroxynaphthalene reductase-like protein Arp2 (267 aa).

NADP(+) contacts are provided by Ile-25, Asn-45, Asp-71, and Asn-98. Active-site proton donor residues include Ser-147 and Ser-148. NADP(+)-binding residues include Tyr-162, Lys-166, Val-195, and Thr-197. The Proton acceptor role is filled by Tyr-162. Lys-166 functions as the Lowers pKa of active site Tyr in the catalytic mechanism.

The protein belongs to the short-chain dehydrogenases/reductases (SDR) family.

Functionally, hydroxynaphthalene reductase-like protein; part of the Pks2 gene cluster that mediates the formation of infectious structures (appressoria), enabling these fungi to kill insects faster. The product of the Pks2 gene cluster is different from the one of Pks1 and has still not been identified. The protein is Hydroxynaphthalene reductase-like protein Arp2 of Metarhizium anisopliae (strain ARSEF 549).